Here is a 103-residue protein sequence, read N- to C-terminus: Large ribosomal subunit protein bL21 (103 aa).

It belongs to the bacterial ribosomal protein bL21 family. Part of the 50S ribosomal subunit. Contacts protein L20.

In terms of biological role, this protein binds to 23S rRNA in the presence of protein L20. The sequence is that of Large ribosomal subunit protein bL21 from Alteromonas mediterranea (strain DSM 17117 / CIP 110805 / LMG 28347 / Deep ecotype).